The following is a 153-amino-acid chain: UPF0178 protein MXAN_5526 (153 aa).

This sequence belongs to the UPF0178 family.

This chain is UPF0178 protein MXAN_5526, found in Myxococcus xanthus (strain DK1622).